The chain runs to 146 residues: Mitochondrial DnaJ homolog 2 (146 aa).

The J domain occupies Glu-85 to Arg-146.

In terms of assembly, interacts with PAM16/TIM16 and is recruited by the PAM complex.

It localises to the mitochondrion inner membrane. In terms of biological role, plays a role in mitochondrial biogenesis and protein folding. Participates in the translocation of transit peptide-containing proteins from the inner membrane into the mitochondrial matrix in an ATP-dependent manner, probably by stimulating activity of mtHSP70 (SSC1). This chain is Mitochondrial DnaJ homolog 2 (MDJ2), found in Saccharomyces cerevisiae (strain ATCC 204508 / S288c) (Baker's yeast).